The chain runs to 206 residues: Ribosomal RNA large subunit methyltransferase E (206 aa).

Residues Gly60, Trp62, Asp80, Asp96, and Asp121 each coordinate S-adenosyl-L-methionine. Catalysis depends on Lys161, which acts as the Proton acceptor.

This sequence belongs to the class I-like SAM-binding methyltransferase superfamily. RNA methyltransferase RlmE family.

Its subcellular location is the cytoplasm. The catalysed reaction is uridine(2552) in 23S rRNA + S-adenosyl-L-methionine = 2'-O-methyluridine(2552) in 23S rRNA + S-adenosyl-L-homocysteine + H(+). In terms of biological role, specifically methylates the uridine in position 2552 of 23S rRNA at the 2'-O position of the ribose in the fully assembled 50S ribosomal subunit. This is Ribosomal RNA large subunit methyltransferase E from Nitrosomonas europaea (strain ATCC 19718 / CIP 103999 / KCTC 2705 / NBRC 14298).